The sequence spans 387 residues: Transmembrane protein 120 homolog (387 aa).

Residues 1 to 39 (MNIDSLKNEWEELNKEFAELESCNRRYIELLEQLHSHQQ) are a coiled coil. Asparagine 111 is a glycosylation site (N-linked (GlcNAc...) asparagine). Helical transmembrane passes span 130–150 (FKLI…IFNY), 155–175 (LAFI…ESIL), 191–211 (FIST…HWQI), 216–238 (FMYF…KGLL), 264–284 (GLSF…YNAW), and 302–322 (VMSG…LWVV). The interval 346 to 387 (RKEMKNSASDLDLSSGSKLSPTATTTTSIATATQTPAEKKET) is disordered. Phosphoserine occurs at positions 352, 354, and 365. Over residues 352-381 (SASDLDLSSGSKLSPTATTTTSIATATQTP) the composition is skewed to low complexity.

It belongs to the TMEM120 family.

The protein localises to the membrane. The chain is Transmembrane protein 120 homolog from Drosophila melanogaster (Fruit fly).